Here is a 490-residue protein sequence, read N- to C-terminus: E3 ubiquitin-protein ligase Hakai (490 aa).

The tract at residues 34–60 (QANKAKPAPRTQRTINRMPAKAPPGDE) is disordered. An RING-type zinc finger spans residues 108 to 148 (CDKCGLPIKIYGRMIPCKHVFCYDCAILHEKKGDKMCPGCS). The tract at residues 147–205 (CSDPVQRIEQCTRGSLFMCSIVQGCKRTYLSQRDLQAHINHRHMRAGKPVTRASLENVH) is HYB domain. Residues 163–189 (FMCSIVQGCKRTYLSQRDLQAHINHRH) form a C2H2-type zinc finger. Phosphoserine is present on residues S200, S284, and S289. The segment at 254 to 490 (QPHEDIRAPP…DQTRYRPYYQ (237 aa)) is disordered. Composition is skewed to pro residues over residues 341–358 (APPPPPPPPISHPMPHPP), 371–388 (APPPPMTSAPPPITPPPG), and 398–422 (MNHPPPGPPPPQHGGPPVTAPPPHH). Residues 426 to 441 (NSLPQFTEDQGTLSPP) are compositionally biased toward polar residues. Positions 456–477 (PRGPPPPPRLQGPPSQTPLPGP) are enriched in pro residues.

Belongs to the Hakai family. Homodimer. Interacts with tyrosine-phosphorylated SRC substrates. Component of the WMM complex, a N6-methyltransferase complex composed of a catalytic subcomplex, named MAC, and of an associated subcomplex, named MACOM. The MAC subcomplex is composed of METTL3 and METTL14. The MACOM subcomplex is composed of WTAP, ZC3H13, CBLL1/HAKAI, VIRMA, and, in some cases of RBM15 (RBM15 or RBM15B). Also a component of a MACOM-like complex, named WTAP complex, composed of WTAP, ZC3H13, CBLL1, VIRMA, RBM15, BCLAF1 and THRAP3. In terms of processing, phosphorylated on tyrosine residues.

It localises to the nucleus speckle. It is found in the nucleus. Its subcellular location is the nucleoplasm. The protein resides in the cytoplasm. The enzyme catalyses S-ubiquitinyl-[E2 ubiquitin-conjugating enzyme]-L-cysteine + [acceptor protein]-L-lysine = [E2 ubiquitin-conjugating enzyme]-L-cysteine + N(6)-ubiquitinyl-[acceptor protein]-L-lysine.. It participates in protein modification; protein ubiquitination. In terms of biological role, E3 ubiquitin-protein ligase that mediates ubiquitination of several tyrosine-phosphorylated Src substrates, including CDH1, CTTN and DOK1. Targets CDH1 for endocytosis and degradation. Associated component of the WMM complex, a complex that mediates N6-methyladenosine (m6A) methylation of RNAs, a modification that plays a role in the efficiency of mRNA splicing and RNA processing. Its function in the WMM complex is unknown. This chain is E3 ubiquitin-protein ligase Hakai, found in Macaca fascicularis (Crab-eating macaque).